Here is a 484-residue protein sequence, read N- to C-terminus: tRNA sulfurtransferase (484 aa).

In terms of domain architecture, THUMP spans 61–165; sequence TLLVELLGRI…NDKMMLIKAR (105 aa). Residues 183–184, K265, G287, and Q296 contribute to the ATP site; that span reads LI. An intrachain disulfide couples C344 to C456. Positions 404–484 constitute a Rhodanese domain; sequence LSANEVILDI…DNVKVLNKIS (81 aa). Residue C456 is the Cysteine persulfide intermediate of the active site.

It belongs to the ThiI family.

The protein localises to the cytoplasm. The catalysed reaction is [ThiI sulfur-carrier protein]-S-sulfanyl-L-cysteine + a uridine in tRNA + 2 reduced [2Fe-2S]-[ferredoxin] + ATP + H(+) = [ThiI sulfur-carrier protein]-L-cysteine + a 4-thiouridine in tRNA + 2 oxidized [2Fe-2S]-[ferredoxin] + AMP + diphosphate. It carries out the reaction [ThiS sulfur-carrier protein]-C-terminal Gly-Gly-AMP + S-sulfanyl-L-cysteinyl-[cysteine desulfurase] + AH2 = [ThiS sulfur-carrier protein]-C-terminal-Gly-aminoethanethioate + L-cysteinyl-[cysteine desulfurase] + A + AMP + 2 H(+). The protein operates within cofactor biosynthesis; thiamine diphosphate biosynthesis. Functionally, catalyzes the ATP-dependent transfer of a sulfur to tRNA to produce 4-thiouridine in position 8 of tRNAs, which functions as a near-UV photosensor. Also catalyzes the transfer of sulfur to the sulfur carrier protein ThiS, forming ThiS-thiocarboxylate. This is a step in the synthesis of thiazole, in the thiamine biosynthesis pathway. The sulfur is donated as persulfide by IscS. This is tRNA sulfurtransferase from Histophilus somni (strain 2336) (Haemophilus somnus).